A 132-amino-acid polypeptide reads, in one-letter code: Protein KRTCAP2 homolog (132 aa).

Transmembrane regions (helical) follow at residues Met1–Ser21, Met35–Val55, Ala69–Val89, and Val92–Asn109.

Belongs to the KRTCAP2 family. In terms of assembly, component of the oligosaccharyltransferase (OST) complex.

It is found in the membrane. Functionally, subunit of the oligosaccharyl transferase (OST) complex that catalyzes the initial transfer of a defined glycan (Glc(3)Man(9)GlcNAc(2) in eukaryotes) from the lipid carrier dolichol-pyrophosphate to an asparagine residue within an Asn-X-Ser/Thr consensus motif in nascent polypeptide chains, the first step in protein N-glycosylation. N-glycosylation occurs cotranslationally and the complex associates with the Sec61 complex at the channel-forming translocon complex that mediates protein translocation across the endoplasmic reticulum (ER). All subunits are required for a maximal enzyme activity. The chain is Protein KRTCAP2 homolog from Aedes aegypti (Yellowfever mosquito).